The primary structure comprises 140 residues: Ribosome-binding factor A (140 aa).

Residues Met1 to Arg23 are disordered.

The protein belongs to the RbfA family. As to quaternary structure, monomer. Binds 30S ribosomal subunits, but not 50S ribosomal subunits or 70S ribosomes.

It is found in the cytoplasm. Its function is as follows. One of several proteins that assist in the late maturation steps of the functional core of the 30S ribosomal subunit. Associates with free 30S ribosomal subunits (but not with 30S subunits that are part of 70S ribosomes or polysomes). Required for efficient processing of 16S rRNA. May interact with the 5'-terminal helix region of 16S rRNA. In Acidiphilium cryptum (strain JF-5), this protein is Ribosome-binding factor A.